We begin with the raw amino-acid sequence, 499 residues long: Ent-kaurenoic acid oxidase 1 (499 aa).

The chain crosses the membrane as a helical span at residues 5–25 (AWWAVAAVVAALAVVALDAAV). Residue C443 participates in heme binding.

This sequence belongs to the cytochrome P450 family. Requires heme as cofactor.

Its subcellular location is the endoplasmic reticulum membrane. The catalysed reaction is ent-kaur-16-en-19-oate + 3 reduced [NADPH--hemoprotein reductase] + 3 O2 = gibberellin A12 + 3 oxidized [NADPH--hemoprotein reductase] + 4 H2O + 4 H(+). The enzyme catalyses ent-kaur-16-en-19-oate + reduced [NADPH--hemoprotein reductase] + O2 = ent-7alpha-hydroxykaur-16-en-19-oate + oxidized [NADPH--hemoprotein reductase] + H2O + H(+). It catalyses the reaction ent-7alpha-hydroxykaur-16-en-19-oate + reduced [NADPH--hemoprotein reductase] + O2 = gibberellin A12 aldehyde + oxidized [NADPH--hemoprotein reductase] + 2 H2O + H(+). It carries out the reaction gibberellin A12 aldehyde + reduced [NADPH--hemoprotein reductase] + O2 = gibberellin A12 + oxidized [NADPH--hemoprotein reductase] + H2O + 2 H(+). The protein operates within plant hormone biosynthesis; gibberellin biosynthesis. Its function is as follows. Catalyzes three successive oxidations of ent-kaurenoic acid giving gibberellin 12 (GA12), a key step in gibberellins (GAs) biosynthesis. GAs, which are involved many processes, including stem elongation, play a central role in plant development. This is Ent-kaurenoic acid oxidase 1 from Hordeum vulgare (Barley).